The sequence spans 356 residues: UDP-N-acetylglucosamine--N-acetylmuramyl-(pentapeptide) pyrophosphoryl-undecaprenol N-acetylglucosamine transferase (356 aa).

The UDP-N-acetyl-alpha-D-glucosamine site is built by arginine 166, serine 196, and glutamine 290.

The protein belongs to the glycosyltransferase 28 family. MurG subfamily.

The protein resides in the cell membrane. The catalysed reaction is Mur2Ac(oyl-L-Ala-gamma-D-Glu-L-Lys-D-Ala-D-Ala)-di-trans,octa-cis-undecaprenyl diphosphate + UDP-N-acetyl-alpha-D-glucosamine = beta-D-GlcNAc-(1-&gt;4)-Mur2Ac(oyl-L-Ala-gamma-D-Glu-L-Lys-D-Ala-D-Ala)-di-trans,octa-cis-undecaprenyl diphosphate + UDP + H(+). Its pathway is cell wall biogenesis; peptidoglycan biosynthesis. In terms of biological role, cell wall formation. Catalyzes the transfer of a GlcNAc subunit on undecaprenyl-pyrophosphoryl-MurNAc-pentapeptide (lipid intermediate I) to form undecaprenyl-pyrophosphoryl-MurNAc-(pentapeptide)GlcNAc (lipid intermediate II). The sequence is that of UDP-N-acetylglucosamine--N-acetylmuramyl-(pentapeptide) pyrophosphoryl-undecaprenol N-acetylglucosamine transferase from Staphylococcus aureus (strain MRSA252).